The primary structure comprises 158 residues: uncharacterized protein (158 aa).

The Nudix hydrolase domain occupies 3–130 (YLQRVTNCVL…DGHILDFMMK (128 aa)). The short motif at 34–55 (GKMESGESVRDSVIREYREETG) is the Nudix box element. Mg(2+) contacts are provided by glutamate 49 and glutamate 53.

The protein belongs to the Nudix hydrolase family. Requires Mg(2+) as cofactor.

This is an uncharacterized protein from Bacillus subtilis (strain 168).